We begin with the raw amino-acid sequence, 496 residues long: DEAD-box ATP-dependent RNA helicase 38 (496 aa).

Positions 1 to 91 (MADTVEKVPT…SGDTPYTSAS (91 aa)) are disordered. A2 carries the post-translational modification N-acetylalanine. Low complexity predominate over residues 7-25 (KVPTVVESSSSSTVEASNS). Residues 27-40 (EKTEPTTEKKKWGD) are compositionally biased toward basic and acidic residues. The segment covering 41–51 (VEDDDDEEEAV) has biased composition (acidic residues). The span at 78-91 (KAVTSGDTPYTSAS) shows a compositional bias: polar residues. The short motif at 91 to 120 (SRFEDLNLSPELMKGLYVEMKFEKPSKIQA) is the Q motif element. In terms of domain architecture, Helicase ATP-binding spans 125–301 (MIMTPPHKHL…ARTVKDPNQL (177 aa)). 138–145 (AHNGSGKT) provides a ligand contact to ATP. The short motif at 245–248 (DEAD) is the DEAD box element. In terms of domain architecture, Helicase C-terminal spans 329–483 (VIKDQIMELG…EIKSWNSEEE (155 aa)).

This sequence belongs to the DEAD box helicase family. DDX19/DBP5 subfamily. Interacts with NUP214 (via N-terminus). As to expression, constitutively expressed.

The protein localises to the cytoplasm. Its subcellular location is the nucleus. The enzyme catalyses ATP + H2O = ADP + phosphate + H(+). Its function is as follows. ATP-dependent RNA helicase essential for mRNA export from the nucleus. Plays an important role in the positive regulation of CBF/DREB transcription factors. The chain is DEAD-box ATP-dependent RNA helicase 38 (RH38) from Arabidopsis thaliana (Mouse-ear cress).